The primary structure comprises 271 residues: Type II restriction enzyme ScrFI (271 aa).

The catalysed reaction is Endonucleolytic cleavage of DNA to give specific double-stranded fragments with terminal 5'-phosphates.. In terms of biological role, a P subtype restriction enzyme that recognizes the double-stranded sequence 5'-CCNGG-3' and cleaves after C-2. This is Type II restriction enzyme ScrFI from Lactococcus lactis subsp. cremoris (Streptococcus cremoris).